We begin with the raw amino-acid sequence, 84 residues long: UPF0386 protein R01313 (84 aa).

Belongs to the UPF0386 family.

The polypeptide is UPF0386 protein R01313 (Rhizobium meliloti (strain 1021) (Ensifer meliloti)).